The chain runs to 567 residues: Asparagine--tRNA ligase, chloroplastic/mitochondrial (567 aa).

The OB DNA-binding region spans 113 to 191 (NIMGWVRTLR…VELKVEKIIV (79 aa)).

The protein belongs to the class-II aminoacyl-tRNA synthetase family.

The protein resides in the plastid. It is found in the chloroplast. The protein localises to the mitochondrion. It carries out the reaction tRNA(Asn) + L-asparagine + ATP = L-asparaginyl-tRNA(Asn) + AMP + diphosphate + H(+). This is Asparagine--tRNA ligase, chloroplastic/mitochondrial from Arabidopsis thaliana (Mouse-ear cress).